The sequence spans 263 residues: Shikimate dehydrogenase (NADP(+)) (263 aa).

Shikimate contacts are provided by residues 16–18 (SKS) and threonine 65. The active-site Proton acceptor is lysine 69. Positions 90 and 105 each coordinate shikimate. Residues 125–129 (GSGGS) and leucine 208 each bind NADP(+). Position 210 (tyrosine 210) interacts with shikimate. Glycine 230 lines the NADP(+) pocket.

The protein belongs to the shikimate dehydrogenase family. Homodimer.

The enzyme catalyses shikimate + NADP(+) = 3-dehydroshikimate + NADPH + H(+). The protein operates within metabolic intermediate biosynthesis; chorismate biosynthesis; chorismate from D-erythrose 4-phosphate and phosphoenolpyruvate: step 4/7. Involved in the biosynthesis of the chorismate, which leads to the biosynthesis of aromatic amino acids. Catalyzes the reversible NADPH linked reduction of 3-dehydroshikimate (DHSA) to yield shikimate (SA). The polypeptide is Shikimate dehydrogenase (NADP(+)) (Helicobacter acinonychis (strain Sheeba)).